The chain runs to 257 residues: S-methyl-5'-thioadenosine phosphorylase (257 aa).

Phosphate contacts are provided by residues Ser-10 and 50-51 (RH). Met-180 contributes to the substrate binding site. Thr-181 is a binding site for phosphate. Position 204 to 206 (204 to 206 (DYD)) interacts with substrate.

It belongs to the PNP/MTAP phosphorylase family. MTAP subfamily. As to quaternary structure, homohexamer. Dimer of a homotrimer.

It catalyses the reaction S-methyl-5'-thioadenosine + phosphate = 5-(methylsulfanyl)-alpha-D-ribose 1-phosphate + adenine. It functions in the pathway amino-acid biosynthesis; L-methionine biosynthesis via salvage pathway; S-methyl-5-thio-alpha-D-ribose 1-phosphate from S-methyl-5'-thioadenosine (phosphorylase route): step 1/1. Functionally, catalyzes the reversible phosphorylation of S-methyl-5'-thioadenosine (MTA) to adenine and 5-methylthioribose-1-phosphate. Involved in the breakdown of MTA, a major by-product of polyamine biosynthesis. Responsible for the first step in the methionine salvage pathway after MTA has been generated from S-adenosylmethionine. Has broad substrate specificity with 6-aminopurine nucleosides as preferred substrates. In Pyrococcus abyssi (strain GE5 / Orsay), this protein is S-methyl-5'-thioadenosine phosphorylase (mntP).